We begin with the raw amino-acid sequence, 132 residues long: Transmembrane protein 170B (132 aa).

The Extracellular portion of the chain corresponds to 1–37 (MRAEGADHSMINLSVQQVLSLWAHGTVLRNLTEMWYW). N-linked (GlcNAc...) asparagine glycosylation is present at asparagine 12. A helical transmembrane segment spans residues 38–58 (IFLWALFSSLFVHGAAGVLMF). Over 59–68 (VMLQRHRQGR) the chain is Cytoplasmic. A helical membrane pass occupies residues 69–89 (VISIIAVSIGFLASVTGAMIT). At 90-104 (SAAVAGIYRVAGKNM) the chain is on the extracellular side. A helical membrane pass occupies residues 105 to 125 (APLEALVWGVGQTVLTLIISF). Residues 126–132 (SRILATL) are Cytoplasmic-facing.

It belongs to the TMEM170 family. As to quaternary structure, interacts with CTNNB1.

Its subcellular location is the cell membrane. The sequence is that of Transmembrane protein 170B from Mus musculus (Mouse).